Reading from the N-terminus, the 64-residue chain is Conotoxin Pn-B01122 (64 aa).

An N-terminal signal peptide occupies residues 1–22 (MRCLPVFVILLLLIASAPSVDA). Positions 23 to 48 (RPKTKDDIPLVSFQDNAKRALQILSN) are excised as a propeptide.

Belongs to the conotoxin T superfamily. In terms of processing, contains 2 disulfide bonds that can be either 'C1-C3, C2-C4' or 'C1-C4, C2-C3', since these disulfide connectivities have been observed for conotoxins with cysteine framework V (for examples, see AC P0DQQ7 and AC P81755). In terms of tissue distribution, expressed by the venom duct.

It localises to the secreted. The sequence is that of Conotoxin Pn-B01122 from Conus pennaceus (Feathered cone).